The sequence spans 261 residues: Protein TfpB (261 aa).

This is Protein TfpB (tfpB) from Moraxella bovis.